A 164-amino-acid polypeptide reads, in one-letter code: Putative F-box protein At1g59675 (164 aa).

Positions 9-56 constitute an F-box domain; that stretch reads SQSDHVPLDLTIEILSRLPAKSVGRFRSVSKLWSANTTSQNFINSFAT.

The sequence is that of Putative F-box protein At1g59675 from Arabidopsis thaliana (Mouse-ear cress).